A 99-amino-acid polypeptide reads, in one-letter code: Putative pterin-4-alpha-carbinolamine dehydratase (99 aa).

Belongs to the pterin-4-alpha-carbinolamine dehydratase family.

The enzyme catalyses (4aS,6R)-4a-hydroxy-L-erythro-5,6,7,8-tetrahydrobiopterin = (6R)-L-erythro-6,7-dihydrobiopterin + H2O. In Bradyrhizobium sp. (strain BTAi1 / ATCC BAA-1182), this protein is Putative pterin-4-alpha-carbinolamine dehydratase.